Consider the following 412-residue polypeptide: Nucleoside transporter 1 (412 aa).

The interval 1 to 21 (MSKIKESSSGILGASNNTNKE) is disordered. The Cytoplasmic portion of the chain corresponds to 1-29 (MSKIKESSSGILGASNNTNKESSQKSARS). Polar residues predominate over residues 7 to 21 (SSSGILGASNNTNKE). Residues 30 to 50 (IALPMTYALIGVSCLNVWNSA) form a helical membrane-spanning segment. The Extracellular segment spans residues 51-56 (LGLNIK). The chain crosses the membrane as a helical span at residues 57–77 (ITYNIFQMAGLLTSSVLALFV). Topologically, residues 78–81 (NYPR) are cytoplasmic. A helical membrane pass occupies residues 82-102 (VLLPTSLGVLTLLCAGFQIAH). The Extracellular segment spans residues 103–114 (QTFSDSAFDTYC). The helical transmembrane segment at 115–135 (LAAFITIGLMAGIAQTIAFAI) threads the bilayer. Topologically, residues 136 to 144 (GTTKESNMS) are cytoplasmic. The chain crosses the membrane as a helical span at residues 145–165 (GYISAGIGMSGVLIFCINLIL). The Extracellular portion of the chain corresponds to 166–181 (DYIVSDEKIYEINKSK). Residues 182–202 (LLCLFSISEIFLIITIVCCVL) form a helical membrane-spanning segment. At 203–240 (YIDLFPKNDNNKDSTDIEKAEEKEGRLPLIEIIKDGYK) the chain is on the cytoplasmic side. The chain crosses the membrane as a helical span at residues 241–261 (AILSIFLVNWLSLQLFPGIGH). Over 262-271 (KKWQEKHGMT) the chain is Extracellular. A helical transmembrane segment spans residues 272-294 (DNNVTIIVGMFQVFDFISRYPPN). The Cytoplasmic portion of the chain corresponds to 295 to 310 (FTHIKIFKYFTFSLNT). Residues 311–331 (LLIGNFLRLLFIPWFVLNAVI) form a helical membrane-spanning segment. Topologically, residues 332–343 (SSSFFTNIVQQC) are extracellular. Residues 344-364 (VCIAALAFTNGWFNTVPFIVF) traverse the membrane as a helical segment. Topologically, residues 365–382 (VKELKKVKHQKDIETISR) are cytoplasmic. The chain crosses the membrane as a helical span at residues 383 to 403 (IMVVSLFFGLFFGMLTTCLYD). The Extracellular segment spans residues 404-412 (YFPIGILNN).

It belongs to the SLC29A/ENT transporter (TC 2.A.57) family.

The protein localises to the cell membrane. It catalyses the reaction inosine(in) = inosine(out). The catalysed reaction is adenosine(in) = adenosine(out). The enzyme catalyses hypoxanthine(out) = hypoxanthine(in). It carries out the reaction guanosine(in) = guanosine(out). It catalyses the reaction guanine(out) = guanine(in). The catalysed reaction is thymidine(in) = thymidine(out). The enzyme catalyses uridine(out) = uridine(in). It carries out the reaction uracil(in) = uracil(out). It catalyses the reaction thymine(out) = thymine(in). The catalysed reaction is adenine(out) = adenine(in). The enzyme catalyses cytosine(out) = cytosine(in). It carries out the reaction xanthine(out) = xanthine(in). Its function is as follows. Nucleoside and nucleobase transporter with a broad substrate specificity. In Plasmodium berghei (strain Anka), this protein is Nucleoside transporter 1.